Here is a 101-residue protein sequence, read N- to C-terminus: Salivary thrombin inhibitor anophelin (101 aa).

The signal sequence occupies residues 1–21 (MASKVIVIALLCIALAAFVQG). The segment at 26–101 (THGEEPEYDE…SDSSSGSTEN (76 aa)) is disordered. Positions 31–40 (PEYDEDDGAD) are enriched in acidic residues. Residues 75 to 78 (DPGR) form a blocks active site cleft of host thrombin in a reverse direction compared to substrates region. Basic and acidic residues predominate over residues 75–87 (DPGRRPEFLKQHN). The segment covering 88-101 (NENQSDSSSGSTEN) has biased composition (polar residues). Asn90 carries N-linked (GlcNAc...) asparagine glycosylation.

Belongs to the anophelin family. Interacts with human F2 (thrombin); the interaction results in thrombin inhibition.

It is found in the secreted. Its function is as follows. Salivary protein with anticoagulant activity that inhibits host thrombin (F2). The protein is Salivary thrombin inhibitor anophelin of Anopheles stephensi (Indo-Pakistan malaria mosquito).